The chain runs to 596 residues: Invasin CotH7 (596 aa).

The signal sequence occupies residues 1-17 (MKSLSFISLACLTAVHA). Residues Asn82, Asn146, Asn163, Asn169, Asn288, Asn440, and Asn544 are each glycosylated (N-linked (GlcNAc...) asparagine). Positions 528–544 (SATIAAPATSESASQDN) are enriched in low complexity. The segment at 528–557 (SATIAAPATSESASQDNTSDDTDSASTSSS) is disordered. Ser567 carries the GPI-anchor amidated serine lipid modification. A propeptide spans 568–596 (SASKSAPTFYCLQLVLYLSLSFKNLYKYI) (removed in mature form).

Interacts with host integrin beta-1 ITGB1 on the cell surface of host alveolar epithelial cells.

It is found in the cell membrane. Functionally, promotes invasion of host epithelial cells by adhering to receptors on the host cell surface to facilitate endocytosis of the pathogen into host cells. Probably binds integrin ITGA3:ITGB1 via ITGB1, on the cell surface of host alveolar epithelial cells. This Rhizopus delemar (strain RA 99-880 / ATCC MYA-4621 / FGSC 9543 / NRRL 43880) (Mucormycosis agent) protein is Invasin CotH7.